The following is a 1141-amino-acid chain: Membrane-associated protein gex-3 (1141 aa).

Belongs to the HEM-1/HEM-2 family. As to quaternary structure, interacts with aco-1, gei-13 and gex-2. Interacts with gex-3. As to expression, expressed in neurons.

It localises to the cytoplasm. Rac effector required for tissue morphogenesis, cell migrations and egg laying. May play a role in egg laying and in yolk protein clatherin-mediated endocytosis by oocytes during oogenesis. Plays a role in the formation of gap junctions between EA and EP endodermal precursor cells in embryos. The polypeptide is Membrane-associated protein gex-3 (Caenorhabditis elegans).